The following is a 476-amino-acid chain: MTALDIIIMAAGKGTRMKSRIPKVLQRLAGRPLLHHVLGQAASLQARRVVVVTGHGATEVEAACAGLAGAGGTFDLKFVRQEPQLGTGHAVQQATPALAGDGTVVVLSGDVPLTQAATLRALVEAGAGERLALLTVRLPNPTGYGRIVRGEGGTVQRIVEHKDANDAERAIDEVYSGIMAVPAQRLAGWLARLTNDNAQGEYYLTDIVSMAVADGVPVAAHCIGDALQVAGVNSPAQLAELERAHQRAQAAALMEQGVRLADPARFDLRDDARSGARGEILCAQDVEIDVGCIFTGRVELGEGARIGAYCHISNATIAAGAVVHPFTHIDGEKAGAHVGEGALIGPFARLRPGAQLGREVHIGNFVEVKNSTLADGAKANHLAYLGDASVGERVNYGAGSITANYDGANKHRTVIEADVHIGSNCVLVAPVTIGAGGTVGGGSTITKDTPPGGLSVARGRQVSIANWKRPAKQAKG.

The tract at residues 1–235 is pyrophosphorylase; it reads MTALDIIIMA…ALQVAGVNSP (235 aa). UDP-N-acetyl-alpha-D-glucosamine-binding positions include Lys23, Gln81, 86-87, 108-110, Gly145, Glu160, and Asn233; these read GT and SGD. Asp110 is a binding site for Mg(2+). Asn233 is a binding site for Mg(2+). Residues 236–256 form a linker region; sequence AQLAELERAHQRAQAAALMEQ. The interval 257-476 is N-acetyltransferase; it reads GVRLADPARF…WKRPAKQAKG (220 aa). Positions 351 and 369 each coordinate UDP-N-acetyl-alpha-D-glucosamine. His381 serves as the catalytic Proton acceptor. Residues Tyr384 and Asn395 each contribute to the UDP-N-acetyl-alpha-D-glucosamine site. Residues Ala398, 404 to 405, Ser423, Gly441, and Arg458 contribute to the acetyl-CoA site; that span reads NY.

This sequence in the N-terminal section; belongs to the N-acetylglucosamine-1-phosphate uridyltransferase family. It in the C-terminal section; belongs to the transferase hexapeptide repeat family. In terms of assembly, homotrimer. It depends on Mg(2+) as a cofactor.

Its subcellular location is the cytoplasm. The enzyme catalyses alpha-D-glucosamine 1-phosphate + acetyl-CoA = N-acetyl-alpha-D-glucosamine 1-phosphate + CoA + H(+). It carries out the reaction N-acetyl-alpha-D-glucosamine 1-phosphate + UTP + H(+) = UDP-N-acetyl-alpha-D-glucosamine + diphosphate. It participates in nucleotide-sugar biosynthesis; UDP-N-acetyl-alpha-D-glucosamine biosynthesis; N-acetyl-alpha-D-glucosamine 1-phosphate from alpha-D-glucosamine 6-phosphate (route II): step 2/2. It functions in the pathway nucleotide-sugar biosynthesis; UDP-N-acetyl-alpha-D-glucosamine biosynthesis; UDP-N-acetyl-alpha-D-glucosamine from N-acetyl-alpha-D-glucosamine 1-phosphate: step 1/1. Its pathway is bacterial outer membrane biogenesis; LPS lipid A biosynthesis. In terms of biological role, catalyzes the last two sequential reactions in the de novo biosynthetic pathway for UDP-N-acetylglucosamine (UDP-GlcNAc). The C-terminal domain catalyzes the transfer of acetyl group from acetyl coenzyme A to glucosamine-1-phosphate (GlcN-1-P) to produce N-acetylglucosamine-1-phosphate (GlcNAc-1-P), which is converted into UDP-GlcNAc by the transfer of uridine 5-monophosphate (from uridine 5-triphosphate), a reaction catalyzed by the N-terminal domain. The chain is Bifunctional protein GlmU from Acidovorax ebreus (strain TPSY) (Diaphorobacter sp. (strain TPSY)).